The chain runs to 278 residues: 3-methyl-2-oxobutanoate hydroxymethyltransferase (278 aa).

Residues aspartate 43 and aspartate 82 each contribute to the Mg(2+) site. Residues 43–44, aspartate 82, and lysine 112 each bind 3-methyl-2-oxobutanoate; that span reads DS. Glutamate 114 contacts Mg(2+). The Proton acceptor role is filled by glutamate 181.

It belongs to the PanB family. As to quaternary structure, homodecamer; pentamer of dimers. The cofactor is Mg(2+).

It localises to the cytoplasm. It catalyses the reaction 3-methyl-2-oxobutanoate + (6R)-5,10-methylene-5,6,7,8-tetrahydrofolate + H2O = 2-dehydropantoate + (6S)-5,6,7,8-tetrahydrofolate. It functions in the pathway cofactor biosynthesis; (R)-pantothenate biosynthesis; (R)-pantoate from 3-methyl-2-oxobutanoate: step 1/2. Functionally, catalyzes the reversible reaction in which hydroxymethyl group from 5,10-methylenetetrahydrofolate is transferred onto alpha-ketoisovalerate to form ketopantoate. The protein is 3-methyl-2-oxobutanoate hydroxymethyltransferase of Bacillus cereus (strain ATCC 10987 / NRS 248).